Reading from the N-terminus, the 465-residue chain is Beta-1,2-xylosyltransferase XYXT1 (465 aa).

At 1-11 (MKAAVRSKKSK) the chain is on the cytoplasmic side. A helical; Signal-anchor for type II membrane protein membrane pass occupies residues 12–32 (GSFCHPPLLLLIVAIQFLVIY). Over 33–465 (SPTLDQYMVM…VLLKALHLLR (433 aa)) the chain is Lumenal. N-linked (GlcNAc...) asparagine glycans are attached at residues Asn80, Asn118, Asn125, Asn266, and Asn403.

The protein belongs to the glycosyltransferase 61 family. As to expression, widely expressed.

Its subcellular location is the golgi apparatus membrane. It functions in the pathway glycan metabolism. Its function is as follows. Glycosyltransferase involved in the xylosylation of xylan, the major hemicellulose (non-cellulosic component) of primary and secondary walls of angiosperms. Possesses beta-1,2-xylosyltransferase activity, transferring xylose from UDP-xylose to the xylan backbone. Catalyzes the addition of 2-O-xylosyl side chains to the xylan backbone. This chain is Beta-1,2-xylosyltransferase XYXT1, found in Oryza sativa subsp. japonica (Rice).